Reading from the N-terminus, the 776-residue chain is Glutathione biosynthesis bifunctional protein GshAB (776 aa).

Residues 1 to 354 (MIKLDMTILD…QLADENENNI (354 aa)) form a glutamate--cysteine ligase region. An ATP-grasp domain is found at 521–775 (KLVLAENNIR…IGDKILDFLF (255 aa)). 548-606 (SLFKDKQIVVKPKSTNYGWGISIFKNKFTTEDYQEALNIAFSYDSSVIIEEFIPGDEFR) lines the ATP pocket. The Mg(2+) site is built by Asp728, Glu745, and Asn747. Mn(2+) contacts are provided by Asp728, Glu745, and Asn747.

In the N-terminal section; belongs to the glutamate--cysteine ligase type 1 family. Type 2 subfamily. Monomer. It depends on Mg(2+) as a cofactor. The cofactor is Mn(2+).

It catalyses the reaction L-cysteine + L-glutamate + ATP = gamma-L-glutamyl-L-cysteine + ADP + phosphate + H(+). It carries out the reaction gamma-L-glutamyl-L-cysteine + glycine + ATP = glutathione + ADP + phosphate + H(+). It functions in the pathway sulfur metabolism; glutathione biosynthesis; glutathione from L-cysteine and L-glutamate: step 1/2. Its pathway is sulfur metabolism; glutathione biosynthesis; glutathione from L-cysteine and L-glutamate: step 2/2. Functionally, synthesizes glutathione from L-glutamate and L-cysteine via gamma-L-glutamyl-L-cysteine. The chain is Glutathione biosynthesis bifunctional protein GshAB from Listeria welshimeri serovar 6b (strain ATCC 35897 / DSM 20650 / CCUG 15529 / CIP 8149 / NCTC 11857 / SLCC 5334 / V8).